A 147-amino-acid chain; its full sequence is Prefoldin subunit alpha (147 aa).

It belongs to the prefoldin alpha subunit family. As to quaternary structure, heterohexamer of two alpha and four beta subunits.

Its subcellular location is the cytoplasm. Its function is as follows. Molecular chaperone capable of stabilizing a range of proteins. Seems to fulfill an ATP-independent, HSP70-like function in archaeal de novo protein folding. In Saccharolobus islandicus (strain L.S.2.15 / Lassen #1) (Sulfolobus islandicus), this protein is Prefoldin subunit alpha.